An 86-amino-acid chain; its full sequence is Kappa-theraphotoxin-Cg1a 4 (86 aa).

Residues 1–21 (MKASVLITLAVLGVMFVWASA) form the signal peptide. Residues 22–50 (AELEERGSDQRDSPAWLKSMERIFQSEER) constitute a propeptide that is removed on maturation. Intrachain disulfides connect Cys52/Cys66, Cys59/Cys71, and Cys65/Cys78. A Phenylalanine amide modification is found at Phe84.

Belongs to the neurotoxin 10 (Hwtx-1) family. 28 (Jztx-11) subfamily. As to expression, expressed by the venom gland.

It is found in the secreted. Its function is as follows. This toxin acts as a voltage-dependent gating-modifier. It inhibits the sodium conductance (IC(50)=124 nM) and slows the fast inactivation (EC(50)=1180 nM) of Nav1.5/SCN5A. It significantly shifts the activation to more depolarized voltages and decreases the deactivation of Nav1.5 currents upon extreme depolarization, but only slightly affects voltage-dependence of steady-state inactivation. In addition, this toxin causes an approximately five-fold decrease in the rate of recovery from inactivation and an approximately 1.9-fold reduction in the closed-state inactivation rate. This toxin integrates the functions of site 3 toxins (alpha-scorpion toxins) with site 4 toxins (beta-scorpion and spider toxins) by targeting multiple sites on Nav1.5. Also shows inhibition of voltage-gated potassium channels (5 uM completely inhibits Kv2.1/KCNB1, whereas 5 uM moderately inhibits Kv4.2/KCND2 Kv4.1/KCND1 channels). The polypeptide is Kappa-theraphotoxin-Cg1a 4 (Chilobrachys guangxiensis (Chinese earth tiger tarantula)).